Here is an 86-residue protein sequence, read N- to C-terminus: Large ribosomal subunit protein uL23 (86 aa).

This sequence belongs to the universal ribosomal protein uL23 family. In terms of assembly, part of the 50S ribosomal subunit. Contacts protein L29.

Binds to 23S rRNA. One of the proteins that surrounds the polypeptide exit tunnel on the outside of the ribosome. This Methanococcus aeolicus (strain ATCC BAA-1280 / DSM 17508 / OCM 812 / Nankai-3) protein is Large ribosomal subunit protein uL23.